We begin with the raw amino-acid sequence, 114 residues long: Eukaryotic translation initiation factor 6 (114 aa).

Belongs to the eIF-6 family. As to quaternary structure, monomer. Associates with the 60S ribosomal subunit.

The protein localises to the cytoplasm. Its subcellular location is the nucleus. It is found in the nucleolus. Functionally, binds to the 60S ribosomal subunit and prevents its association with the 40S ribosomal subunit to form the 80S initiation complex in the cytoplasm. May also be involved in ribosome biogenesis. The sequence is that of Eukaryotic translation initiation factor 6 from Trypanosoma cruzi.